Consider the following 405-residue polypeptide: Tyrosine--tRNA ligase (405 aa).

A 'HIGH' region motif is present at residues 48 to 57; sequence PTAPDLHLGH. A 'KMSKS' region motif is present at residues 232–236; that stretch reads KMSKS. Lys235 is an ATP binding site. Residues 343 to 404 form the S4 RNA-binding domain; the sequence is IWLPKLLADA…GKRRFVKVIF (62 aa).

It belongs to the class-I aminoacyl-tRNA synthetase family. TyrS type 2 subfamily. In terms of assembly, homodimer.

It localises to the cytoplasm. It carries out the reaction tRNA(Tyr) + L-tyrosine + ATP = L-tyrosyl-tRNA(Tyr) + AMP + diphosphate + H(+). In terms of biological role, catalyzes the attachment of tyrosine to tRNA(Tyr) in a two-step reaction: tyrosine is first activated by ATP to form Tyr-AMP and then transferred to the acceptor end of tRNA(Tyr). The protein is Tyrosine--tRNA ligase of Desulfotalea psychrophila (strain LSv54 / DSM 12343).